A 227-amino-acid chain; its full sequence is Ribosomal RNA small subunit methyltransferase G (227 aa).

S-adenosyl-L-methionine is bound by residues glycine 81, leucine 86, 131-132 (AE), and arginine 149.

This sequence belongs to the methyltransferase superfamily. RNA methyltransferase RsmG family.

It localises to the cytoplasm. Its function is as follows. Specifically methylates the N7 position of guanine in position 518 of 16S rRNA. This is Ribosomal RNA small subunit methyltransferase G from Rhodococcus jostii (strain RHA1).